The chain runs to 245 residues: PF03932 family protein CutC (245 aa).

The protein belongs to the CutC family.

It localises to the cytoplasm. The protein is PF03932 family protein CutC of Photobacterium profundum (strain SS9).